The primary structure comprises 516 residues: Delta(24)-sterol reductase (516 aa).

An N-terminal signal peptide occupies residues 1–22 (MEPAVSLAVCALLFLLWVRVKG). The Lumenal portion of the chain corresponds to 23-31 (LEFVLIHQR). Residues 32–52 (WVFVCLFLLPLSLIFDIYYYV) form a helical membrane-spanning segment. Residues 53–516 (RAWVVFKLSS…YDKICKAARH (464 aa)) lie on the Cytoplasmic side of the membrane. The FAD-binding PCMH-type domain maps to 58–234 (FKLSSAPRLH…VAAEIRIIPA (177 aa)). An FAD-binding site is contributed by 163–175 (TVGGLIMGTGIES).

This sequence belongs to the FAD-binding oxidoreductase/transferase type 4 family. As to quaternary structure, interacts with DHCR7; this interaction regulates DHCR7 activity. FAD is required as a cofactor.

The protein resides in the endoplasmic reticulum membrane. It is found in the golgi apparatus membrane. It carries out the reaction cholesterol + NADP(+) = desmosterol + NADPH + H(+). The catalysed reaction is lanosterol + NADPH + H(+) = 24,25-dihydrolanosterol + NADP(+). It catalyses the reaction 5alpha-cholest-8-en-3beta-ol + NADP(+) = zymosterol + NADPH + H(+). The protein operates within steroid biosynthesis; cholesterol biosynthesis. Catalyzes the reduction of the delta-24 double bond of sterol intermediates during cholesterol biosynthesis. In addition to its cholesterol-synthesizing activity, can protect cells from oxidative stress by reducing caspase 3 activity during apoptosis induced by oxidative stress. Also protects against amyloid-beta peptide-induced apoptosis. This is Delta(24)-sterol reductase (Dhcr24) from Rattus norvegicus (Rat).